The primary structure comprises 308 residues: Glutamyl-Q tRNA(Asp) synthetase (308 aa).

L-glutamate is bound by residues 19–23 (RFAPS) and Glu-55. The 'HIGH' region motif lies at 22 to 32 (PSPSGELHFGS). Residues Cys-111, Cys-113, Tyr-125, and Cys-129 each coordinate Zn(2+). L-glutamate is bound by residues Tyr-182 and Arg-200. Residues 238-242 (KLSKQ) carry the 'KMSKS' region motif. Lys-241 is an ATP binding site.

This sequence belongs to the class-I aminoacyl-tRNA synthetase family. GluQ subfamily. Zn(2+) serves as cofactor.

Its function is as follows. Catalyzes the tRNA-independent activation of glutamate in presence of ATP and the subsequent transfer of glutamate onto a tRNA(Asp). Glutamate is transferred on the 2-amino-5-(4,5-dihydroxy-2-cyclopenten-1-yl) moiety of the queuosine in the wobble position of the QUC anticodon. This is Glutamyl-Q tRNA(Asp) synthetase from Shigella flexneri.